Reading from the N-terminus, the 492-residue chain is Tyrosinase-like protein 1 (492 aa).

The signal sequence occupies residues 1–22 (MDKMRTLQSLIVKLTLLYGALC). Cu cation contacts are provided by H147, H155, H164, H289, H293, and H316. Residues 472–492 (SEPPLQLEGPSFTSSFDDPRI) are disordered. Over residues 482-492 (SFTSSFDDPRI) the composition is skewed to polar residues.

The cofactor is Cu(2+). In terms of tissue distribution, prismatic layer of shell (at protein level). Expressed primarily in the mantle with highest level in the mantle edge and lower level in the mantle pallium.

Its subcellular location is the secreted. This is Tyrosinase-like protein 1 from Margaritifera margaritifera (Freshwater pearl mussel).